We begin with the raw amino-acid sequence, 248 residues long: 1-(5-phosphoribosyl)-5-[(5-phosphoribosylamino)methylideneamino] imidazole-4-carboxamide isomerase (248 aa).

Aspartate 11 (proton acceptor) is an active-site residue. The active-site Proton donor is aspartate 132.

It belongs to the HisA/HisF family.

Its subcellular location is the cytoplasm. It carries out the reaction 1-(5-phospho-beta-D-ribosyl)-5-[(5-phospho-beta-D-ribosylamino)methylideneamino]imidazole-4-carboxamide = 5-[(5-phospho-1-deoxy-D-ribulos-1-ylimino)methylamino]-1-(5-phospho-beta-D-ribosyl)imidazole-4-carboxamide. The protein operates within amino-acid biosynthesis; L-histidine biosynthesis; L-histidine from 5-phospho-alpha-D-ribose 1-diphosphate: step 4/9. The polypeptide is 1-(5-phosphoribosyl)-5-[(5-phosphoribosylamino)methylideneamino] imidazole-4-carboxamide isomerase (Afipia carboxidovorans (strain ATCC 49405 / DSM 1227 / KCTC 32145 / OM5) (Oligotropha carboxidovorans)).